Consider the following 333-residue polypeptide: Fructose-1,6-bisphosphatase class 1 (333 aa).

4 residues coordinate Mg(2+): Glu-92, Asp-113, Leu-115, and Asp-116. Residues 116-119 (DGSS), Asn-209, Tyr-242, and Lys-272 each bind substrate. Glu-278 lines the Mg(2+) pocket.

It belongs to the FBPase class 1 family. As to quaternary structure, homotetramer. Requires Mg(2+) as cofactor.

It localises to the cytoplasm. It catalyses the reaction beta-D-fructose 1,6-bisphosphate + H2O = beta-D-fructose 6-phosphate + phosphate. It functions in the pathway carbohydrate biosynthesis; Calvin cycle. In Chlorobium luteolum (strain DSM 273 / BCRC 81028 / 2530) (Pelodictyon luteolum), this protein is Fructose-1,6-bisphosphatase class 1.